The following is a 441-amino-acid chain: BTB/POZ domain-containing protein At3g05675 (441 aa).

Residues 20 to 98 (SDIVVRLRNE…LYVVSDDVHE (79 aa)) enclose the BTB domain.

It functions in the pathway protein modification; protein ubiquitination. Functionally, may act as a substrate-specific adapter of an E3 ubiquitin-protein ligase complex (CUL3-RBX1-BTB) which mediates the ubiquitination and subsequent proteasomal degradation of target proteins. This chain is BTB/POZ domain-containing protein At3g05675, found in Arabidopsis thaliana (Mouse-ear cress).